The chain runs to 408 residues: 3-phosphoshikimate 1-carboxyvinyltransferase (408 aa).

Residues Lys20, Ser21, and Arg25 each contribute to the 3-phosphoshikimate site. Lys20 is a binding site for phosphoenolpyruvate. Position 111 (Arg111) interacts with phosphoenolpyruvate. Positions 151, 152, 153, 178, 293, and 320 each coordinate 3-phosphoshikimate. Gln153 contacts phosphoenolpyruvate. The Proton acceptor role is filled by Asp293. Phosphoenolpyruvate is bound by residues Arg324, Arg365, and Lys389.

Belongs to the EPSP synthase family. Monomer.

It localises to the cytoplasm. It catalyses the reaction 3-phosphoshikimate + phosphoenolpyruvate = 5-O-(1-carboxyvinyl)-3-phosphoshikimate + phosphate. It participates in metabolic intermediate biosynthesis; chorismate biosynthesis. Catalyzes the transfer of the enolpyruvyl moiety of phosphoenolpyruvate (PEP) to the 5-hydroxyl of shikimate-3-phosphate (S3P) to produce enolpyruvyl shikimate-3-phosphate and inorganic phosphate. This Sulfurisphaera tokodaii (strain DSM 16993 / JCM 10545 / NBRC 100140 / 7) (Sulfolobus tokodaii) protein is 3-phosphoshikimate 1-carboxyvinyltransferase.